A 264-amino-acid chain; its full sequence is Thymidylate synthase (264 aa).

Arg-21 is a binding site for dUMP. A (6R)-5,10-methylene-5,6,7,8-tetrahydrofolate-binding site is contributed by His-51. 126–127 contributes to the dUMP binding site; sequence RR. The Nucleophile role is filled by Cys-146. DUMP is bound by residues 166-169, Asn-177, and 207-209; these read RSCD and HLY. Asp-169 provides a ligand contact to (6R)-5,10-methylene-5,6,7,8-tetrahydrofolate. Position 263 (Ala-263) interacts with (6R)-5,10-methylene-5,6,7,8-tetrahydrofolate.

It belongs to the thymidylate synthase family. Bacterial-type ThyA subfamily. As to quaternary structure, homodimer.

It is found in the cytoplasm. It carries out the reaction dUMP + (6R)-5,10-methylene-5,6,7,8-tetrahydrofolate = 7,8-dihydrofolate + dTMP. It participates in pyrimidine metabolism; dTTP biosynthesis. In terms of biological role, catalyzes the reductive methylation of 2'-deoxyuridine-5'-monophosphate (dUMP) to 2'-deoxythymidine-5'-monophosphate (dTMP) while utilizing 5,10-methylenetetrahydrofolate (mTHF) as the methyl donor and reductant in the reaction, yielding dihydrofolate (DHF) as a by-product. This enzymatic reaction provides an intracellular de novo source of dTMP, an essential precursor for DNA biosynthesis. This chain is Thymidylate synthase, found in Shigella dysenteriae serotype 1 (strain Sd197).